The primary structure comprises 698 residues: MARKTPIERYRNIGISAHIDAGKTTTTERILFYTGVNHKIGEVHDGAATMDWMEQEQERGITITSAATTTFWKGMAMQFPEHRFNIIDTPGHVDFTIEVERSMRVLDGAVMVYCAVGGVQPQSETVWRQANKYKVPRIAFVNKMDRQGANFFRAVEQVKTRLRGNPVPIVVPIGAEDGFSGVVDLLKMKAIIWDEASQGMKFEYGDIPADLVSVAEEWREKMVEAAAEVSDEMMDKYLGGETLTEEEIIAGLRERTLKCEIQPMLCGSAFKNKGVQRMLDAVIELLPSPTEVPAIKGETDGVEAERHASDDEPFSALAFKLMNDPYVGQLTFFRVYSGVVKSGDTVLNSVKGKKERIGRIVQMHANDRKEIEEVRAGDIAAAIGLKEVTTGETLCAVDAEIILERMEFPDPVIHVAVEPKTKADQEKMGVALNRLAKEDPSFRVRTDEESGQTIISGMGELHLEILVDRMKREFGVEANVGAPQVAYRETITKTVTDVEGKHVKQSGGKGQYGHAVITLEPSGEGKGYQFFDEIKGGVIPREFIPSVDKGIQNTLGNGILAGFPVVDVTVRLTFGSYHDVDSSQIAFELAGSLAFKEAMRRAGPCILEPMMAVEVETPEEYMGDVMGDLNRRRGMVQGMDDDGLGGKKIKAEVPLAEMFGYSTDLRSATQGRATYSMEFKHYSEAPKHVAEAVMAAKK.

Residues 8 to 290 enclose the tr-type G domain; the sequence is ERYRNIGISA…AVIELLPSPT (283 aa). Residues 17 to 24, 88 to 92, and 142 to 145 each bind GTP; these read AHIDAGKT, DTPGH, and NKMD.

It belongs to the TRAFAC class translation factor GTPase superfamily. Classic translation factor GTPase family. EF-G/EF-2 subfamily.

The protein localises to the cytoplasm. Catalyzes the GTP-dependent ribosomal translocation step during translation elongation. During this step, the ribosome changes from the pre-translocational (PRE) to the post-translocational (POST) state as the newly formed A-site-bound peptidyl-tRNA and P-site-bound deacylated tRNA move to the P and E sites, respectively. Catalyzes the coordinated movement of the two tRNA molecules, the mRNA and conformational changes in the ribosome. This chain is Elongation factor G, found in Chromobacterium violaceum (strain ATCC 12472 / DSM 30191 / JCM 1249 / CCUG 213 / NBRC 12614 / NCIMB 9131 / NCTC 9757 / MK).